We begin with the raw amino-acid sequence, 432 residues long: Phosphomethylpyrimidine synthase (432 aa).

Substrate contacts are provided by residues Asn-66, Met-95, Tyr-124, His-163, 185 to 187 (SRG), 226 to 229 (DGLR), and Glu-265. His-269 provides a ligand contact to Zn(2+). Substrate is bound at residue Tyr-292. His-333 contacts Zn(2+). Positions 409, 412, and 416 each coordinate [4Fe-4S] cluster.

It belongs to the ThiC family. [4Fe-4S] cluster is required as a cofactor.

The enzyme catalyses 5-amino-1-(5-phospho-beta-D-ribosyl)imidazole + S-adenosyl-L-methionine = 4-amino-2-methyl-5-(phosphooxymethyl)pyrimidine + CO + 5'-deoxyadenosine + formate + L-methionine + 3 H(+). It functions in the pathway cofactor biosynthesis; thiamine diphosphate biosynthesis. Its function is as follows. Catalyzes the synthesis of the hydroxymethylpyrimidine phosphate (HMP-P) moiety of thiamine from aminoimidazole ribotide (AIR) in a radical S-adenosyl-L-methionine (SAM)-dependent reaction. This chain is Phosphomethylpyrimidine synthase, found in Thermoanaerobacter sp. (strain X514).